The sequence spans 1386 residues: X-linked retinitis pigmentosa GTPase regulator homolog (1386 aa).

Disordered regions lie at residues 1–25, 37–56, and 730–760; these read MFFK…TSSE, AGAR…KARR, and MPQM…PEQH. Positions 9 to 25 are enriched in low complexity; sequence SRKTSANSSSDTSTSSE. A compositionally biased stretch (basic residues) spans 45–56; that stretch reads SVHRQSGKKARR. RCC1 repeat units lie at residues 737-787, 788-838, 839-891, and 893-943; these read SKRS…VLSS, SGQL…FICS, DGSL…VLTD, and GRVL…CITE. The interval 972 to 994 is disordered; sequence LKNTEDPSSPSPSTNGSTPRVNL. RCC1 repeat units follow at residues 1034-1085 and 1087-1139; these read EGTL…ASTD and GSVF…FVQK.

In terms of biological role, could be a guanine-nucleotide releasing factor for glo-1. May play a role in gut granule biogenesis. Regulates axon termination in PLM and ALM neurons. The chain is X-linked retinitis pigmentosa GTPase regulator homolog (glo-4) from Caenorhabditis elegans.